A 183-amino-acid polypeptide reads, in one-letter code: Transcription factor E (183 aa).

The 94-residue stretch at 4-97 (YIELVRRYVY…SWSIKDEDIR (94 aa)) folds into the HTH TFE/IIEalpha-type domain.

It belongs to the TFE family. In terms of assembly, monomer. Interaction with RNA polymerase subunits RpoF and RpoE is necessary for Tfe stimulatory transcription activity. Able to interact with Tbp and RNA polymerase in the absence of DNA promoter. Interacts both with the preinitiation and elongation complexes.

Transcription factor that plays a role in the activation of archaeal genes transcribed by RNA polymerase. Facilitates transcription initiation by enhancing TATA-box recognition by TATA-box-binding protein (Tbp), and transcription factor B (Tfb) and RNA polymerase recruitment. Not absolutely required for transcription in vitro, but particularly important in cases where Tbp or Tfb function is not optimal. It dynamically alters the nucleic acid-binding properties of RNA polymerases by stabilizing the initiation complex and destabilizing elongation complexes. Seems to translocate with the RNA polymerase following initiation and acts by binding to the non template strand of the transcription bubble in elongation complexes. The chain is Transcription factor E from Caldivirga maquilingensis (strain ATCC 700844 / DSM 13496 / JCM 10307 / IC-167).